Reading from the N-terminus, the 125-residue chain is MAKHITSSEYDAVIATAYCYVEAMEKGSSKRAKEGFHPDGGIYGYVDGEFKGGSISNLFDFLDQSPEGHKIKAHLDVIAMTPTTAIVKTEVEMNPPETDYTDFLGMVKIDGKWQIVSKIFHSYPR.

It catalyses the reaction (2S)-3-(4-methoxyphenyl)-2-[(3S)-3-(methylamino)-8-oxo-1-azaspiro[4.5]decan-1-yl]propanal = (1S,3S,6S,7S,8R)-7-hydroxy-6-[(4-methoxyphenyl)methyl]-3-(methylamino)-5-azatricyclo[6.3.1.0(1,5)]dodecan-9-one. The protein operates within secondary metabolite biosynthesis. In terms of biological role, aldolase; part of the gene cluster that mediates the biosynthesis of the alkaloid (-)-FR901483, a potent immunosuppressant that shows efficacy in animal models and a probable inhibitor of purine nucleotide biosynthesis by targeting phosphoribosylpyrophosphate amidotransferase (PPAT). Within the pathway, FrzH is a new kind of aldolase with no similarities to known aldolases, and which catalyzes the intramolecular aldol condensation via formation of a C9-C3' bond to yield an aza-tricyclic product. The biosynthesis of (-)-FR901483 starts with the condensation of two L-tyrosines to yield (S,S)-dityrosyl-piperazine. This process occurs in 3 steps with the non-canonical nonribosomal peptide synthetase FrzA catalyzing the reduction of L-tyrosine into L-tyrosinal, the spontaneous condensation of 2 L-tyrosinal units, and the subsequent reduction by the NmrA-like family domain-containing oxidoreductase FrzB. The cytochrome P450 monooxygenase FrzC then performs coupling between N10 and C1' to morph the piperazine into a 1,4-diazabicyclo[3.2.1]octane spiro-fused to a 2,5-cyclohexadienone. The dienone portion is further reduced to cyclohexanone by the flavin-dependent reductase FrzD. The methyltranserases (MTs) FrzE and FrzF are then involved in the methylation at the C10' amine and the C4 phenolic oxygen, respectively. The order of the two MTs appear to be interchangeable. Cleavage of the C9-N10' bond by the dioxygenase FrzG then leads to formation of a conjugated iminium. In addition to the oxidation of C9, an additional dehydrogenation between C7 and C8 can occur to give a likely shunt product. The next biosynthetic step is the intramolecular aldol condensation catalyzed by the newly identified aldolase FrzH to yield an aza-tricyclic product with the formation of a C9-C3' bond. The short-chain dehydrogenase/reductase FrzI then produces dephospho-(-)-FR901483 that is phosphorylated at C4'-OH into (-)-FR901483 by the phosphotransferase FrzJ. The sequence is that of Aldolase FrzH from Cladobotryum sp.